The sequence spans 1675 residues: Clathrin heavy chain 1 (1675 aa).

Ala-2 carries the N-acetylalanine modification. Positions 2-479 (AQILPIRFQE…VDPTLALSVY (478 aa)) are globular terminal domain. WD40-like repeat stretches follow at residues 24–67 (NIGF…RPIS), 68–107 (ADSAIMNPASKVIALKAGKTLQIFNIEMKSKMKAHTMTDD), 108–149 (VTFW…SSLA), 150–195 (GCQI…QPIE), 196–257 (GHAA…PEAQ), 258–301 (NDFP…ISGE), and 302–330 (TIFVTAPHEATAGIIGVNRKGQVLSVCVE). Ser-67 bears the Phosphoserine mark. Thr-105 is subject to Phosphothreonine. Tyr-184 is modified (phosphotyrosine). Phosphothreonine is present on Thr-394. The interval 449–465 (EKWLKEDKLECSEELGD) is binding site for the uncoating ATPase, involved in lattice disassembly. The tract at residues 480–523 (LRANVPNKVIQCFAETGQVQKIVLYAKKVGYTPDWIFLLRNVMR) is flexible linker. Positions 524–634 (ISPDQGQQFA…RALEHFTDLY (111 aa)) are distal segment. The interval 524–1675 (ISPDQGQQFA…QPQPGFGYSM (1152 aa)) is heavy chain arm. CHCR repeat units follow at residues 537 to 683 (VQDE…QICV), 686 to 828 (ASKY…SEDV), 833 to 972 (ILVV…PLID), 979 to 1124 (LSET…VKEA), 1128 to 1269 (YIKA…FRLA), 1274 to 1420 (LHIV…LLLN), and 1423 to 1566 (LMVL…RECF). Tyr-634 is subject to Phosphotyrosine. Residues 639 to 1675 (AVVHTHLLNP…QPQPGFGYSM (1037 aa)) are proximal segment. Lys-737 carries the post-translational modification N6-succinyllysine. At Lys-856 the chain carries N6-acetyllysine. A Phosphotyrosine modification is found at Tyr-899. Ser-1167 carries the phosphoserine modification. Tyr-1206 bears the Phosphotyrosine mark. Positions 1213–1522 (AAKLLYNNVS…YLFKGNNRWK (310 aa)) are involved in binding clathrin light chain. Ser-1229 is subject to Phosphoserine. Lys-1441 is modified (N6-acetyllysine; alternate). Position 1441 is an N6-succinyllysine; alternate (Lys-1441). Phosphotyrosine is present on residues Tyr-1477 and Tyr-1487. A Phosphoserine modification is found at Ser-1494. An N6-acetyllysine modification is found at Lys-1501. The interval 1550-1675 (AEELLQWFLQ…QPQPGFGYSM (126 aa)) is trimerization.

This sequence belongs to the clathrin heavy chain family. Clathrin triskelions, composed of 3 heavy chains and 3 light chains, are the basic subunits of the clathrin coat. In the presence of light chains, hub assembly is influenced by both the pH and the concentration of calcium. Interacts with HIP1. Interacts with DENND1A, DENND1B and DENND1C. Interacts with ERBB2. Interacts with FKBP6. Interacts with OCRL. Interacts with CKAP5 and TACC3 forming the TACC3/ch-TOG/clathrin complex located at spindle inter-microtubules bridges; the complex implicates clathrin triskelions; TACC3 and CLTC are proposed to form a composite microtubule interaction surface. Plays a role in early autophagosome formation. Interacts with ATG16L1 (via N-terminus). Interacts with RFTN1; the interaction occurs in response to pathogens. Interacts with USP2 isoform 2. Interacts with TMEM106B (via N-terminus). Interacts with DNAJC6; this interaction produces a local change in heavy-chain contacts, creating a detectable global distortion of the clathrin coat and leads to the recruitment of HSPA8.

The protein resides in the cytoplasmic vesicle membrane. It localises to the membrane. It is found in the coated pit. The protein localises to the melanosome. Its subcellular location is the cytoplasm. The protein resides in the cytoskeleton. It localises to the spindle. Clathrin is the major protein of the polyhedral coat of coated pits and vesicles. Two different adapter protein complexes link the clathrin lattice either to the plasma membrane or to the trans-Golgi network. Acts as a component of the TACC3/ch-TOG/clathrin complex proposed to contribute to stabilization of kinetochore fibers of the mitotic spindle by acting as inter-microtubule bridge. The TACC3/ch-TOG/clathrin complex is required for the maintenance of kinetochore fiber tension. Plays a role in early autophagosome formation. Interaction with DNAJC6 mediates the recruitment of HSPA8 to the clathrin lattice and creates local destabilization of the lattice promoting uncoating. The chain is Clathrin heavy chain 1 from Mus musculus (Mouse).